The following is a 199-amino-acid chain: dITP/XTP pyrophosphatase (199 aa).

Position 7–12 (7–12 (TSNRGK)) interacts with substrate. Residue D74 is the Proton acceptor of the active site. Mg(2+) is bound at residue D74. Substrate contacts are provided by residues S75, 156–159 (FGYD), K179, and 184–185 (HR).

This sequence belongs to the HAM1 NTPase family. In terms of assembly, homodimer. Requires Mg(2+) as cofactor.

It carries out the reaction XTP + H2O = XMP + diphosphate + H(+). The enzyme catalyses dITP + H2O = dIMP + diphosphate + H(+). It catalyses the reaction ITP + H2O = IMP + diphosphate + H(+). In terms of biological role, pyrophosphatase that catalyzes the hydrolysis of nucleoside triphosphates to their monophosphate derivatives, with a high preference for the non-canonical purine nucleotides XTP (xanthosine triphosphate), dITP (deoxyinosine triphosphate) and ITP. Seems to function as a house-cleaning enzyme that removes non-canonical purine nucleotides from the nucleotide pool, thus preventing their incorporation into DNA/RNA and avoiding chromosomal lesions. The protein is dITP/XTP pyrophosphatase of Sulfurimonas denitrificans (strain ATCC 33889 / DSM 1251) (Thiomicrospira denitrificans (strain ATCC 33889 / DSM 1251)).